The sequence spans 830 residues: Formin-like protein 14 (830 aa).

Positions 1–34 (MAMAMAMPSSSPPLFFSLLNLMLLLLLLAPYCSA) are cleaved as a signal peptide. The segment covering 40–59 (NNTHHRSSSPTQTTLQQLHS) has biased composition (polar residues). The disordered stretch occupies residues 40–195 (NNTHHRSSSP…NISTLVHPTQ (156 aa)). Composition is skewed to pro residues over residues 61-86 (DSPP…PAPR) and 95-135 (PPPP…PTPK). Over residues 149 to 160 (YPFTNYPFFPNF) the composition is skewed to low complexity. A helical transmembrane segment spans residues 203-223 (VLQALLLSFLSLCLLLLSALL). The disordered stretch occupies residues 235–446 (HHSHSHPNAR…LHSDKLKPGS (212 aa)). Over residues 314–323 (RPLPPLPRVG) the composition is skewed to pro residues. The span at 324 to 369 (PPSGEFASRSSASDPSTAPPAAAEASSSSLSPSSPSASSPTLGSSP) shows a compositional bias: low complexity. The FH2 domain occupies 390-823 (PKRRPQPPEP…MMGRDWNMAA (434 aa)). Residues 424-446 (HSPSEKSMRKSRPLHSDKLKPGS) show a composition bias toward basic and acidic residues.

It belongs to the formin-like family. Class-I subfamily.

The protein localises to the membrane. In Oryza sativa subsp. japonica (Rice), this protein is Formin-like protein 14 (FH14).